A 352-amino-acid chain; its full sequence is C-C chemokine receptor type 5 (352 aa).

At 1–30 (MDYQVSSPTYDIDYYTSEPCQKIKVKQIAA) the chain is on the extracellular side. Position 3 is a sulfotyrosine (Tyr-3). Ser-6 and Ser-7 each carry an O-linked (GalNAc...) serine glycan. Residues Tyr-10, Tyr-14, and Tyr-15 each carry the sulfotyrosine modification. 2 cysteine pairs are disulfide-bonded: Cys-20/Cys-269 and Cys-101/Cys-178. Residues 31-58 (RLLPPLYSLVFIFGFVGNILVVLILINC) form a helical membrane-spanning segment. Residues 59–68 (KRLKSMTDIY) are Cytoplasmic-facing. The helical transmembrane segment at 69–89 (LLNLAISDLLFLLTVPFWAHY) threads the bilayer. Over 90–102 (AAAQWDFGNTMCQ) the chain is Extracellular. The helical transmembrane segment at 103–124 (LLTGLYFIGFFSGIFFIILLTI) threads the bilayer. Over 125 to 141 (DRYLAIVHAVFALKART) the chain is Cytoplasmic. A helical transmembrane segment spans residues 142-166 (VTFGVVTSVITWVVAVFASLPRIIF). Residues 167-198 (TRSQREGLHYTCSSHFPYSQYQFWKNFQTLKI) are Extracellular-facing. Residues 199 to 218 (VILGLVLPLLVMVICYSGIL) form a helical membrane-spanning segment. The Cytoplasmic portion of the chain corresponds to 219-235 (KTLLRCRNDKKRHRAVR). The chain crosses the membrane as a helical span at residues 236 to 260 (LIFTIMIVYFLFWAPYNIVLLLNTF). Topologically, residues 261–277 (QEFFGLNNCSSSNRLDQ) are extracellular. Residues 278 to 301 (AMQVTETLGMTHCCINPIIYAFVG) traverse the membrane as a helical segment. Residues 302–352 (EKFRNYLLVFFQKHIAKRFCKCCSIFQQDAPERASSVYTRSTGEQETSVGL) are Cytoplasmic-facing. 3 S-palmitoyl cysteine lipidation sites follow: Cys-321, Cys-323, and Cys-324. Residues Ser-336, Ser-337, Ser-342, and Ser-349 each carry the phosphoserine; by BARK1 modification.

It belongs to the G-protein coupled receptor 1 family. Interacts with PRAF2. Efficient ligand binding to CCL3/MIP-1alpha and CCL4/MIP-1beta requires sulfation, O-glycosylation and sialic acid modifications. Glycosylation on Ser-6 is required for efficient binding of CCL4. Interacts with GRK2. Interacts with ARRB1 and ARRB2. Interacts with CNIH4. Interacts with S100A4; this interaction stimulates T-lymphocyte chemotaxis. In terms of processing, sulfated on at least 2 of the N-terminal tyrosines. Sulfation is required for efficient binding of the chemokines, CCL3 and CCL4. Post-translationally, palmitoylation in the C-terminal is important for cell surface expression. Phosphorylation on serine residues in the C-terminal is stimulated by binding CC chemokines especially by APO-RANTES. In terms of processing, O-glycosylated, but not N-glycosylated. Ser-6 appears to be the major site even if Ser-7 may be also O-glycosylated. Also sialylated glycans present which contribute to chemokine binding. Thr-16 and Ser-17 may also be glycosylated and, if so, with small moieties such as a T-antigen.

The protein resides in the cell membrane. Receptor for a number of inflammatory CC-chemokines including CCL3/MIP-1-alpha, CCL4/MIP-1-beta and RANTES and subsequently transduces a signal by increasing the intracellular calcium ion level. May play a role in the control of granulocytic lineage proliferation or differentiation. Participates in T-lymphocyte migration to the infection site by acting as a chemotactic receptor. The chain is C-C chemokine receptor type 5 (CCR5) from Chlorocebus sabaeus (Green monkey).